The sequence spans 410 residues: LL-diaminopimelate aminotransferase (410 aa).

Substrate is bound by residues Y15 and G42. Pyridoxal 5'-phosphate-binding positions include Y72, 108 to 109, Y132, N187, Y218, and 246 to 248; these read SK and SFS. 3 residues coordinate substrate: K109, Y132, and N187. K249 is subject to N6-(pyridoxal phosphate)lysine. Pyridoxal 5'-phosphate-binding residues include R257 and N292. Substrate-binding residues include N292 and R388.

This sequence belongs to the class-I pyridoxal-phosphate-dependent aminotransferase family. LL-diaminopimelate aminotransferase subfamily. As to quaternary structure, homodimer. Pyridoxal 5'-phosphate serves as cofactor.

The enzyme catalyses (2S,6S)-2,6-diaminopimelate + 2-oxoglutarate = (S)-2,3,4,5-tetrahydrodipicolinate + L-glutamate + H2O + H(+). It participates in amino-acid biosynthesis; L-lysine biosynthesis via DAP pathway; LL-2,6-diaminopimelate from (S)-tetrahydrodipicolinate (aminotransferase route): step 1/1. Involved in the synthesis of meso-diaminopimelate (m-DAP or DL-DAP), required for both lysine and peptidoglycan biosynthesis. Catalyzes the direct conversion of tetrahydrodipicolinate to LL-diaminopimelate. The polypeptide is LL-diaminopimelate aminotransferase (Geobacter sulfurreducens (strain ATCC 51573 / DSM 12127 / PCA)).